The chain runs to 59 residues: Small ribosomal subunit protein bS21 (59 aa).

Belongs to the bacterial ribosomal protein bS21 family.

The sequence is that of Small ribosomal subunit protein bS21 from Acaryochloris marina (strain MBIC 11017).